The primary structure comprises 428 residues: D-inositol 3-phosphate glycosyltransferase (428 aa).

His-5 lines the 1D-myo-inositol 3-phosphate pocket. UDP-N-acetyl-alpha-D-glucosamine contacts are provided by residues 11–12 (QP) and Gly-19. 1D-myo-inositol 3-phosphate is bound by residues 16 to 21 (DAGGMN), Lys-74, Tyr-107, Thr-131, and Arg-151. Residues Arg-225, Lys-230, and Gln-283 each contribute to the UDP-N-acetyl-alpha-D-glucosamine site. Residues Phe-292, Gln-293, and Ala-295 each contribute to the Mg(2+) site. UDP-N-acetyl-alpha-D-glucosamine is bound by residues Glu-305 and Glu-313. Thr-319 contributes to the Mg(2+) binding site.

The protein belongs to the glycosyltransferase group 1 family. MshA subfamily. As to quaternary structure, homodimer.

The catalysed reaction is 1D-myo-inositol 3-phosphate + UDP-N-acetyl-alpha-D-glucosamine = 1D-myo-inositol 2-acetamido-2-deoxy-alpha-D-glucopyranoside 3-phosphate + UDP + H(+). In terms of biological role, catalyzes the transfer of a N-acetyl-glucosamine moiety to 1D-myo-inositol 3-phosphate to produce 1D-myo-inositol 2-acetamido-2-deoxy-glucopyranoside 3-phosphate in the mycothiol biosynthesis pathway. This is D-inositol 3-phosphate glycosyltransferase from Mycobacterium leprae (strain Br4923).